Reading from the N-terminus, the 160-residue chain is Large ribosomal subunit protein uL15 (160 aa).

Basic and acidic residues predominate over residues 1–13 (MKLNEIRDNEGAR). The tract at residues 1–41 (MKLNEIRDNEGARKSRIRVGRGIGSGKGKTGGRGVKGQKSR) is disordered. A compositionally biased stretch (gly residues) spans 21–35 (RGIGSGKGKTGGRGV).

It belongs to the universal ribosomal protein uL15 family. As to quaternary structure, part of the 50S ribosomal subunit.

Binds to the 23S rRNA. This Parvibaculum lavamentivorans (strain DS-1 / DSM 13023 / NCIMB 13966) protein is Large ribosomal subunit protein uL15.